A 226-amino-acid polypeptide reads, in one-letter code: ATP synthase F(0) complex subunit a (226 aa).

The next 6 helical transmembrane spans lie at 11 to 31, 68 to 88, 97 to 117, 138 to 158, 164 to 184, and 194 to 214; these read APTILGQPATIPIIMFPTLLI, WSLMLMSLITFITMTNLLGLL, QLSMNLAMAIPLWAGTIITGL, IPMLVMIETISLLIQPMALAV, ITAGHLLMHLIGNTMLTLSTI, and VLLMLLTILEIAVALIQAYVF.

This sequence belongs to the ATPase A chain family. As to quaternary structure, component of the ATP synthase complex composed at least of ATP5F1A/subunit alpha, ATP5F1B/subunit beta, ATP5MC1/subunit c (homooctomer), MT-ATP6/subunit a, MT-ATP8/subunit 8, ATP5ME/subunit e, ATP5MF/subunit f, ATP5MG/subunit g, ATP5MK/subunit k, ATP5MJ/subunit j, ATP5F1C/subunit gamma, ATP5F1D/subunit delta, ATP5F1E/subunit epsilon, ATP5PF/subunit F6, ATP5PB/subunit b, ATP5PD/subunit d, ATP5PO/subunit OSCP. ATP synthase complex consists of a soluble F(1) head domain (subunits alpha(3) and beta(3)) - the catalytic core - and a membrane F(0) domain - the membrane proton channel (subunits c, a, 8, e, f, g, k and j). These two domains are linked by a central stalk (subunits gamma, delta, and epsilon) rotating inside the F1 region and a stationary peripheral stalk (subunits F6, b, d, and OSCP). Interacts with DNAJC30; interaction is direct.

The protein resides in the mitochondrion inner membrane. The catalysed reaction is H(+)(in) = H(+)(out). Functionally, subunit a, of the mitochondrial membrane ATP synthase complex (F(1)F(0) ATP synthase or Complex V) that produces ATP from ADP in the presence of a proton gradient across the membrane which is generated by electron transport complexes of the respiratory chain. ATP synthase complex consist of a soluble F(1) head domain - the catalytic core - and a membrane F(1) domain - the membrane proton channel. These two domains are linked by a central stalk rotating inside the F(1) region and a stationary peripheral stalk. During catalysis, ATP synthesis in the catalytic domain of F(1) is coupled via a rotary mechanism of the central stalk subunits to proton translocation. With the subunit c (ATP5MC1), forms the proton-conducting channel in the F(0) domain, that contains two crucial half-channels (inlet and outlet) that facilitate proton movement from the mitochondrial intermembrane space (IMS) into the matrix. Protons are taken up via the inlet half-channel and released through the outlet half-channel, following a Grotthuss mechanism. The chain is ATP synthase F(0) complex subunit a from Papio hamadryas (Hamadryas baboon).